Consider the following 87-residue polypeptide: Small ribosomal subunit protein bS20 (87 aa).

The interval 1 to 25 (MANIKSAKKRAVQSEKHRLHNASRR) is disordered.

This sequence belongs to the bacterial ribosomal protein bS20 family.

In terms of biological role, binds directly to 16S ribosomal RNA. This is Small ribosomal subunit protein bS20 from Baumannia cicadellinicola subsp. Homalodisca coagulata.